The sequence spans 115 residues: Tyrosine-protein phosphatase 22 (115 aa).

The Tyrosine-protein phosphatase domain occupies 1–115 (WLMIVEQKCR…ETGGDAPMVV (115 aa)). Residue Asp-83 coordinates substrate.

It belongs to the protein-tyrosine phosphatase family.

The enzyme catalyses O-phospho-L-tyrosyl-[protein] + H2O = L-tyrosyl-[protein] + phosphate. The protein is Tyrosine-protein phosphatase 22 (STY-22) of Styela plicata (Wrinkled sea squirt).